The sequence spans 199 residues: Recombination protein RecR (199 aa).

The segment at 58–73 (CKKCFNLTSEEECDIC) adopts a C4-type zinc-finger fold. In terms of domain architecture, Toprim spans 81-175 (NIICVVAETK…KVTRIAYGLP (95 aa)).

Belongs to the RecR family.

Functionally, may play a role in DNA repair. It seems to be involved in an RecBC-independent recombinational process of DNA repair. It may act with RecF and RecO. This is Recombination protein RecR from Prochlorococcus marinus (strain MIT 9515).